The primary structure comprises 109 residues: Aquaporin-2 (109 aa).

Residues 1–6 (SIAFSR) are Cytoplasmic-facing. A helical transmembrane segment spans residues 7–27 (AVFSEFLATLLFVFFGLGSAL). The Extracellular segment spans residues 28–35 (NWPQALPS). Residues 36–54 (VLQIAMAFGLAIGTLVQTL) traverse the membrane as a helical segment. The Cytoplasmic segment spans residues 55-59 (GHISG). The segment at residues 60–69 (AHINPAVTVA) is an intramembrane region (discontinuously helical). An NPA 1 motif is present at residues 63-65 (NPA). Residues 70-80 (CLVGCHVSFLR) are Cytoplasmic-facing. A helical membrane pass occupies residues 81–102 (ATFYVAAQLLGAVAGAALLHEL). Residues 103–109 (TPPDIRG) are Extracellular-facing.

The protein belongs to the MIP/aquaporin (TC 1.A.8) family. In terms of assembly, homotetramer. Post-translationally, serine phosphorylation is necessary and sufficient for expression at the apical membrane. Endocytosis is not phosphorylation-dependent. In terms of processing, N-glycosylated.

Its subcellular location is the apical cell membrane. It is found in the basolateral cell membrane. The protein localises to the cell membrane. The protein resides in the cytoplasmic vesicle membrane. It localises to the golgi apparatus. Its subcellular location is the trans-Golgi network membrane. The catalysed reaction is H2O(in) = H2O(out). The enzyme catalyses glycerol(in) = glycerol(out). Functionally, forms a water-specific channel that provides the plasma membranes of renal collecting duct with high permeability to water, thereby permitting water to move in the direction of an osmotic gradient. Plays an essential role in renal water homeostasis. Could also be permeable to glycerol. This chain is Aquaporin-2, found in Amblysomus hottentotus (Hottentot golden mole).